Here is a 126-residue protein sequence, read N- to C-terminus: Small ribosomal subunit protein bS6 (126 aa).

This sequence belongs to the bacterial ribosomal protein bS6 family.

Its function is as follows. Binds together with bS18 to 16S ribosomal RNA. In Actinobacillus succinogenes (strain ATCC 55618 / DSM 22257 / CCUG 43843 / 130Z), this protein is Small ribosomal subunit protein bS6.